A 151-amino-acid polypeptide reads, in one-letter code: Methylglyoxal synthase (151 aa).

The MGS-like domain occupies 1–151; the sequence is MKKTTRTMAA…DYQAYLAERT (151 aa). Substrate-binding positions include His19, Lys23, 45–48, and 65–66; these read TGTT and SG. The active-site Proton donor/acceptor is Asp71. Position 98 (His98) interacts with substrate.

It belongs to the methylglyoxal synthase family.

The enzyme catalyses dihydroxyacetone phosphate = methylglyoxal + phosphate. Catalyzes the formation of methylglyoxal from dihydroxyacetone phosphate. The chain is Methylglyoxal synthase from Vibrio cholerae serotype O1 (strain ATCC 39541 / Classical Ogawa 395 / O395).